The chain runs to 67 residues: Large ribosomal subunit protein bL31c (67 aa).

It belongs to the bacterial ribosomal protein bL31 family. Type A subfamily. Part of the 50S ribosomal subunit.

The protein localises to the plastid. Its subcellular location is the chloroplast. Binds the 23S rRNA. This is Large ribosomal subunit protein bL31c (rpl31) from Cyanidioschyzon merolae (strain NIES-3377 / 10D) (Unicellular red alga).